The following is a 149-amino-acid chain: DnaJ homolog subfamily C member 24 (149 aa).

Residues 11-82 form the J domain; that stretch reads DWYSILGADP…ETKREYDLQR (72 aa). Positions 93 to 148 constitute a DPH-type MB domain; that stretch reads VDAQVYLEEMSWNEGDHSFYLSCRCGGKYSVSKDEAEEVSLISCDTCSLIIELLHY. Zn(2+) is bound by residues Cys115, Cys117, Cys136, and Cys139.

Belongs to the DPH4 family. As to quaternary structure, monomer and homooligomer. Iron binding promotes oligomerization.

It is found in the cytoplasm. It localises to the cytoskeleton. The protein operates within protein modification; peptidyl-diphthamide biosynthesis. Its function is as follows. Stimulates the ATPase activity of several Hsp70-type chaperones. This ability is enhanced by iron-binding. The iron-bound form is redox-active and can function as electron carrier. Plays a role in the diphthamide biosynthesis, a post-translational modification of histidine which occurs in translation elongation factor 2 (EEF2) which can be ADP-ribosylated by diphtheria toxin and by Pseudomonas exotoxin A (Eta). The chain is DnaJ homolog subfamily C member 24 from Homo sapiens (Human).